Consider the following 577-residue polypeptide: Lysine-specific demethylase 7B (577 aa).

Residues 5-56 (QLYCVCRQPYDVSRFMIECDICKDWFHGSCVEVEEHYAVDIDVYHCPNCDVH) form a PHD-type zinc finger. The 157-residue stretch at 198 to 354 (FSDTKMAELV…MQLRCYEMER (157 aa)) folds into the JmjC domain. Substrate is bound at residue Thr-247. Fe cation-binding residues include His-250 and Asp-252. Lys-267 provides a ligand contact to substrate. Residue His-322 coordinates Fe cation. The disordered stretch occupies residues 460-513 (CPSTRSAHERGSHARKTARRLRGHHHHHHRHHHHHHHHHHHNHQHSDGPKAPSH). A compositionally biased stretch (basic residues) spans 472-502 (HARKTARRLRGHHHHHHRHHHHHHHHHHHNH).

The protein belongs to the JHDM1 histone demethylase family. JHDM1D subfamily. The cofactor is Fe(2+). Predominantly expressed in brain.

Its subcellular location is the nucleus. Its function is as follows. Histone demethylase required for brain development. Specifically demethylates dimethylated 'Lys-9' and 'Lys-27' (H3K9me2 and H3K27me2, respectively) of histone H3 and monomethylated histone H4 'Lys-20' residue (H4K20Me1), thereby playing a central role in histone code. This is Lysine-specific demethylase 7B (jhdm1db) from Danio rerio (Zebrafish).